A 305-amino-acid chain; its full sequence is Heterogeneous nuclear ribonucleoprotein A0 (305 aa).

Residue methionine 1 is modified to N-acetylmethionine. Residues 7–86 (CKLFIGGLNV…VELKRAVSRE (80 aa)) form the RRM 1 domain. At serine 68 the chain carries Phosphoserine. A Glycyl lysine isopeptide (Lys-Gly) (interchain with G-Cter in SUMO2) cross-link involves residue lysine 80. The residue at position 84 (serine 84) is a Phosphoserine; by MAPKAPK2. Residues lysine 96, lysine 98, lysine 99, and lysine 106 each participate in a glycyl lysine isopeptide (Lys-Gly) (interchain with G-Cter in SUMO2) cross-link. The region spanning 98–175 (KKLFVGGLKG…HRVEVKKAVP (78 aa)) is the RRM 2 domain. Residue lysine 133 is modified to N6-acetyllysine. Arginine 139 is modified (omega-N-methylarginine). Glycyl lysine isopeptide (Lys-Gly) (interchain with G-Cter in SUMO2) cross-links involve residues lysine 154, lysine 159, lysine 172, and lysine 176. Disordered regions lie at residues 174-214 (VPKE…KGGG) and 262-305 (QSSY…GSSF). Gly residues-rich tracts occupy residues 181 to 200 (SGGG…GRGR) and 269 to 281 (KSGG…GSSW). Position 188 is a phosphoserine (serine 188). Arginine 284 bears the Omega-N-methylarginine mark. Residues 290 to 305 (YRGGYGGGGGYGGSSF) are compositionally biased toward gly residues. Arginine 291 is modified (asymmetric dimethylarginine; alternate). Arginine 291 bears the Dimethylated arginine; alternate mark. Arginine 291 is modified (omega-N-methylarginine; alternate).

In terms of processing, phosphorylated at Ser-84 by MAPKAPK2 in response to LPS treatment, promoting stabilization of GADD45A mRNA. Arg-291 is dimethylated, probably to asymmetric dimethylarginine.

The protein resides in the nucleus. In terms of biological role, mRNA-binding component of ribonucleosomes. Specifically binds AU-rich element (ARE)-containing mRNAs. Involved in post-transcriptional regulation of cytokines mRNAs. The sequence is that of Heterogeneous nuclear ribonucleoprotein A0 (HNRNPA0) from Homo sapiens (Human).